The primary structure comprises 207 residues: Cytochrome c biogenesis ATP-binding export protein CcmA (207 aa).

In terms of domain architecture, ABC transporter spans 4–207; the sequence is LEARELLCER…RISLTQTGAA (204 aa). Position 36–43 (36–43) interacts with ATP; the sequence is GSNGAGKT.

It belongs to the ABC transporter superfamily. CcmA exporter (TC 3.A.1.107) family. As to quaternary structure, the complex is composed of two ATP-binding proteins (CcmA) and two transmembrane proteins (CcmB).

Its subcellular location is the cell inner membrane. The catalysed reaction is heme b(in) + ATP + H2O = heme b(out) + ADP + phosphate + H(+). Functionally, part of the ABC transporter complex CcmAB involved in the biogenesis of c-type cytochromes; once thought to export heme, this seems not to be the case, but its exact role is uncertain. Responsible for energy coupling to the transport system. This is Cytochrome c biogenesis ATP-binding export protein CcmA from Escherichia coli (strain UTI89 / UPEC).